Reading from the N-terminus, the 177-residue chain is ATP synthase subunit delta (177 aa).

It belongs to the ATPase delta chain family. As to quaternary structure, F-type ATPases have 2 components, F(1) - the catalytic core - and F(0) - the membrane proton channel. F(1) has five subunits: alpha(3), beta(3), gamma(1), delta(1), epsilon(1). F(0) has three main subunits: a(1), b(2) and c(10-14). The alpha and beta chains form an alternating ring which encloses part of the gamma chain. F(1) is attached to F(0) by a central stalk formed by the gamma and epsilon chains, while a peripheral stalk is formed by the delta and b chains.

It is found in the cell inner membrane. Its function is as follows. F(1)F(0) ATP synthase produces ATP from ADP in the presence of a proton or sodium gradient. F-type ATPases consist of two structural domains, F(1) containing the extramembraneous catalytic core and F(0) containing the membrane proton channel, linked together by a central stalk and a peripheral stalk. During catalysis, ATP synthesis in the catalytic domain of F(1) is coupled via a rotary mechanism of the central stalk subunits to proton translocation. This protein is part of the stalk that links CF(0) to CF(1). It either transmits conformational changes from CF(0) to CF(1) or is implicated in proton conduction. The chain is ATP synthase subunit delta from Shewanella sp. (strain MR-4).